Here is a 333-residue protein sequence, read N- to C-terminus: Glycerol-3-phosphate dehydrogenase [NAD(P)+] (333 aa).

Positions 12, 31, and 105 each coordinate NADPH. Sn-glycerol 3-phosphate contacts are provided by Lys-105, Gly-134, and Ser-136. Ala-138 contacts NADPH. The sn-glycerol 3-phosphate site is built by Lys-189, Asp-242, Ser-252, Arg-253, and Asn-254. Lys-189 serves as the catalytic Proton acceptor. Arg-253 provides a ligand contact to NADPH. NADPH is bound by residues Val-278 and Glu-280.

It belongs to the NAD-dependent glycerol-3-phosphate dehydrogenase family.

Its subcellular location is the cytoplasm. The enzyme catalyses sn-glycerol 3-phosphate + NAD(+) = dihydroxyacetone phosphate + NADH + H(+). The catalysed reaction is sn-glycerol 3-phosphate + NADP(+) = dihydroxyacetone phosphate + NADPH + H(+). The protein operates within membrane lipid metabolism; glycerophospholipid metabolism. Catalyzes the reduction of the glycolytic intermediate dihydroxyacetone phosphate (DHAP) to sn-glycerol 3-phosphate (G3P), the key precursor for phospholipid synthesis. The sequence is that of Glycerol-3-phosphate dehydrogenase [NAD(P)+] from Brachyspira hyodysenteriae (strain ATCC 49526 / WA1).